The primary structure comprises 1296 residues: Protein ORF75 (1296 aa).

It localises to the virion tegument. The sequence is that of Protein ORF75 (ORF75) from Homo sapiens (Human).